We begin with the raw amino-acid sequence, 545 residues long: Spermatogenesis-associated serine-rich protein 2 (545 aa).

The span at Lys87–Pro96 shows a compositional bias: basic residues. Residues Lys87–Val133 are disordered. The span at Lys97 to Pro107 shows a compositional bias: low complexity. The span at Asp108–Gly126 shows a compositional bias: polar residues. Phosphoserine occurs at positions 142, 145, and 147. 2 disordered regions span residues Arg202–Lys232 and Val390–Ser545. A compositionally biased stretch (low complexity) spans Ser391 to Pro413. Residues Arg455–Pro464 show a composition bias toward polar residues. Position 520 is a phosphoserine (Ser520).

The protein belongs to the SPATS2 family. Detected in testis, in spermatocytes and round spermatids (at protein level). Highly expressed in testis, and detected at lower levels in brain, heart, thymus, skeletal muscle, ovary, stomach and lung.

It is found in the cytoplasm. This Mus musculus (Mouse) protein is Spermatogenesis-associated serine-rich protein 2 (Spats2).